Consider the following 193-residue polypeptide: Ribonuclease HII (193 aa).

Residues 15 to 193 (YIVAGVDEAG…SYHRKSFKFC (179 aa)) enclose the RNase H type-2 domain. D21, E22, and D112 together coordinate a divalent metal cation.

Belongs to the RNase HII family. Mn(2+) is required as a cofactor. The cofactor is Mg(2+).

The protein resides in the cytoplasm. It carries out the reaction Endonucleolytic cleavage to 5'-phosphomonoester.. Endonuclease that specifically degrades the RNA of RNA-DNA hybrids. This is Ribonuclease HII from Rickettsia typhi (strain ATCC VR-144 / Wilmington).